The sequence spans 130 residues: Methylglyoxal synthase (130 aa).

The MGS-like domain occupies 1–130; it reads MMTRPRIALI…AELSRVEAQP (130 aa). Substrate contacts are provided by residues His-12, Lys-16, 38 to 41, and 58 to 59; these read TGTT and SG. The Proton donor/acceptor role is filled by Asp-64. His-91 is a binding site for substrate.

This sequence belongs to the methylglyoxal synthase family.

The enzyme catalyses dihydroxyacetone phosphate = methylglyoxal + phosphate. Functionally, catalyzes the formation of methylglyoxal from dihydroxyacetone phosphate. The polypeptide is Methylglyoxal synthase (Cupriavidus pinatubonensis (strain JMP 134 / LMG 1197) (Cupriavidus necator (strain JMP 134))).